The sequence spans 890 residues: Major vault protein (890 aa).

MVP repeat units follow at residues 2–56 (SMEE…VPPR), 57–111 (HYCM…DITP), 112–164 (LQVV…EIIQ), 165–217 (ATVI…DVVD), 218–272 (AVIL…GVVS), 273–323 (VTTL…IQNV), 324–379 (YVLS…ERQA), 380–457 (IPLD…KTRV), and 458–520 (VSYR…LLGP). The segment at 425 to 455 (ELLNKGQDPLADRGEKETSKTPKLSTPRNKT) is disordered. The span at 434–444 (LADRGEKETSK) shows a compositional bias: basic and acidic residues. A Glycyl lysine isopeptide (Lys-Gly) (interchain with G-Cter in SUMO2) cross-link involves residue lysine 444.

The vault ribonucleoprotein particle is a huge (400 A x 670 A) cage structure of 12.9 MDa. It consists of a dimer of half-vaults, with each half-vault comprising 39 identical major vault protein (MVP) chains, PARP4 and one or more vault RNAs (vRNAs). Interacts with TEP1. Interacts with PTEN and activated MAPK1. The phosphorylated protein interacts with the SH2 domains of PTPN11 and SRC. Interacts with APEX1. May interact with ZNF540. Phosphorylated on Tyr residues after EGF stimulation. In terms of processing, dephosphorylated by PTPN11.

It is found in the cytoplasm. The protein localises to the nucleus. Required for normal vault structure. Vaults are multi-subunit structures that may act as scaffolds for proteins involved in signal transduction. Vaults may also play a role in nucleo-cytoplasmic transport. Down-regulates IFNG-mediated STAT1 signaling and subsequent activation of JAK. Down-regulates SRC activity and signaling through MAP kinases. This is Major vault protein (MVP) from Bos taurus (Bovine).